The primary structure comprises 149 residues: 18 kDa antigen 1 (149 aa).

The sHSP domain maps to 21 to 131 (TAARPAVMPM…KPRKIAVGRG (111 aa)).

The protein belongs to the small heat shock protein (HSP20) family.

Functionally, not known. This protein is one of the major immune reactive proteins in mycobacteria. The protein is 18 kDa antigen 1 of Mycobacterium intracellulare.